We begin with the raw amino-acid sequence, 247 residues long: Isoprenyl transferase (247 aa).

The active site involves Asp18. Mg(2+) is bound at residue Asp18. Residues 19-22, Trp23, Arg31, His35, and 63-65 contribute to the substrate site; these read GNGR and SSE. The Proton acceptor role is filled by Asn66. Substrate is bound by residues Trp67, Arg69, Arg186, and 192–194; that span reads RLS. Glu205 is a binding site for Mg(2+).

The protein belongs to the UPP synthase family. Homodimer. It depends on Mg(2+) as a cofactor.

Catalyzes the condensation of isopentenyl diphosphate (IPP) with allylic pyrophosphates generating different type of terpenoids. This Rhizobium meliloti (strain 1021) (Ensifer meliloti) protein is Isoprenyl transferase.